Here is a 184-residue protein sequence, read N- to C-terminus: GTP cyclohydrolase 1 (184 aa).

Residues Cys75, His78, and Cys146 each coordinate Zn(2+).

This sequence belongs to the GTP cyclohydrolase I family. Homomer.

It catalyses the reaction GTP + H2O = 7,8-dihydroneopterin 3'-triphosphate + formate + H(+). It functions in the pathway cofactor biosynthesis; 7,8-dihydroneopterin triphosphate biosynthesis; 7,8-dihydroneopterin triphosphate from GTP: step 1/1. This Streptococcus pneumoniae (strain ATCC 700669 / Spain 23F-1) protein is GTP cyclohydrolase 1.